The sequence spans 595 residues: Thiol:disulfide interchange protein DsbD (595 aa).

The N-terminal stretch at 1–24 (MAQRFITLILLLCSVLLAPHSAQS) is a signal peptide. C134 and C140 form a disulfide bridge. The tract at residues 166-186 (NSSATVNPPATTQPEGDATPV) is disordered. The next 9 membrane-spanning stretches (helical) occupy residues 197 to 217 (ALLI…YPLI), 233 to 253 (ILIL…LLGL), 270 to 290 (YVLI…FGLY), 311 to 331 (GGSL…CSPC), 332 to 352 (TTAP…MLAG), 353 to 373 (GGTL…VTLF), 384 to 404 (WMQY…VFLL), 411 to 431 (VWGL…AFVL), and 435 to 455 (AHAG…LIVA). Cysteines 209 and 331 form a disulfide. The Thioredoxin domain maps to 452–592 (LIVARPLQDW…FLQHLQNTPA (141 aa)). An intrachain disulfide couples C507 to C510.

It belongs to the thioredoxin family. DsbD subfamily.

The protein resides in the cell inner membrane. The enzyme catalyses [protein]-dithiol + NAD(+) = [protein]-disulfide + NADH + H(+). The catalysed reaction is [protein]-dithiol + NADP(+) = [protein]-disulfide + NADPH + H(+). In terms of biological role, required to facilitate the formation of correct disulfide bonds in some periplasmic proteins and for the assembly of the periplasmic c-type cytochromes. Acts by transferring electrons from cytoplasmic thioredoxin to the periplasm. This transfer involves a cascade of disulfide bond formation and reduction steps. This Yersinia pestis bv. Antiqua (strain Nepal516) protein is Thiol:disulfide interchange protein DsbD.